An 830-amino-acid chain; its full sequence is Periplasmic nitrate reductase (830 aa).

Positions 1–30 (MTTRREFIKRSAAVTAACTAGISLSGEASN) form a signal peptide, tat-type signal. Residues 40–96 (LKWSKAPCRFCGTGCSVNVAVKDNQVVATHGDIQSEVNRGLNCVKGYFLSKIMYGKD) form the 4Fe-4S Mo/W bis-MGD-type domain. 4 residues coordinate [4Fe-4S] cluster: C47, C50, C54, and C82. Residues K84, Q151, N176, C180, 213–220 (WGSNMAEM), 244–248 (STFQH), M374, Q378, N484, 510–511 (SE), K533, D560, and 720–729 (TGRVLEHWHS) contribute to the Mo-bis(molybdopterin guanine dinucleotide) site. W796 provides a ligand contact to substrate. Residues N804 and K821 each coordinate Mo-bis(molybdopterin guanine dinucleotide).

The protein belongs to the prokaryotic molybdopterin-containing oxidoreductase family. NasA/NapA/NarB subfamily. In terms of assembly, component of the periplasmic nitrate reductase NapAB complex composed of NapA and NapB. Requires [4Fe-4S] cluster as cofactor. Mo-bis(molybdopterin guanine dinucleotide) serves as cofactor. Post-translationally, predicted to be exported by the Tat system. The position of the signal peptide cleavage has not been experimentally proven.

Its subcellular location is the periplasm. It carries out the reaction 2 Fe(II)-[cytochrome] + nitrate + 2 H(+) = 2 Fe(III)-[cytochrome] + nitrite + H2O. In terms of biological role, catalytic subunit of the periplasmic nitrate reductase complex NapAB. Receives electrons from NapB and catalyzes the reduction of nitrate to nitrite. The chain is Periplasmic nitrate reductase from Hahella chejuensis (strain KCTC 2396).